The sequence spans 465 residues: G1/S-specific cyclin CLN3 (465 aa).

Positions 44–171 (EMLHHLLSVE…HILKSLEWVV (128 aa)) constitute a Cyclin N-terminal domain.

This sequence belongs to the cyclin family. In terms of assembly, interacts with CDC28 and SLA1. In terms of processing, hyperphosphorylated. GRR1 preferentially mediates the degradation of hyperphosphorylated CLN3.

G1/S-specific cyclin essential for the control of the cell cycle at the G1/S (start) transition. CLN3 may be an upstream activator of the G1 cyclins which directly catalyze start. Required for budding and for cell cycle progression and morphogenesis in environment-induced hyphae. Degradation is mediated by GRR1. Through binding to CDC28, controls the phosphorylation of SLA1 which regulates cortical actin patch dynamics. The chain is G1/S-specific cyclin CLN3 (CLN3) from Candida albicans (strain SC5314 / ATCC MYA-2876) (Yeast).